A 703-amino-acid chain; its full sequence is Protein CNGC15c (703 aa).

Over residues 1–10 (MGFDNPRSER) the composition is skewed to basic and acidic residues. A disordered region spans residues 1 to 23 (MGFDNPRSERFEDDPEISKIPTT). Transmembrane regions (helical) follow at residues 91 to 111 (IFLVACLVSLFVDPLFFYLPV), 179 to 199 (GFWLDFIAALPLPQVLIWIII), 216 to 236 (FFIIFQYIPRLYLIFPLSSQI), 255 to 275 (LMLYMLASHILGACWYLLSIE), and 372 to 392 (FIGEIMVAIVVATLGLVLFAL). 480-565 (LFDQMDERML…WALDPRPSVI (86 aa)) contacts a nucleoside 3',5'-cyclic phosphate. The IQ domain maps to 616-644 (RTWAACFIQAAWRRHKKRKEAAELRAKEN). Residues 676 to 703 (KGVNMHSGTNSGVVSSLQKPTEPDFSDE) form a disordered region. Residues 681 to 694 (HSGTNSGVVSSLQK) are compositionally biased toward polar residues.

Belongs to the cyclic nucleotide-gated cation channel (TC 1.A.1.5) family. As to quaternary structure, interacts (via N-terminus) with DMI1 (via c-terminus). The Nod factor has no effect on this interaction, implying that the complex is maintained after activation. Expressed in roots, stems, leaves, flowers and pods.

The protein localises to the nucleus membrane. Cyclic nucleotide-gated channel involved in the establishment of both rhizobial and mycorrhizal associations. Required for full activation of nuclear-localized Ca(2+) oscillations by Nod and Myc factors. Simultaneous activation of the K(+)-permeable channel DMI1 and the Ca(2+) channel CNGC15 can give rise to sustained Ca(2+) oscillations. May function during fertilization in both female and male gametophytic Ca(2+) signaling. This chain is Protein CNGC15c, found in Medicago truncatula (Barrel medic).